A 238-amino-acid chain; its full sequence is Cysteine-rich venom protein natrin-2 (238 aa).

The N-terminal stretch at 1 to 19 (MIAFIVLLSLAAVLQQSSG) is a signal peptide. In terms of domain architecture, SCP spans 38 to 164 (VDKHNALRRS…SSKYLYVCQY (127 aa)). 8 cysteine pairs are disulfide-bonded: Cys-75/Cys-153, Cys-92/Cys-165, Cys-148/Cys-162, Cys-184/Cys-191, Cys-187/Cys-196, Cys-200/Cys-233, Cys-209/Cys-227, and Cys-218/Cys-231. Residues 200–233 (CKHHNVFSNCQSLAKQNACQTEWMKSKCAASCFC) form the ShKT domain.

In terms of tissue distribution, expressed by the venom gland.

It localises to the secreted. Inhibits carbachol-induced muscle contraction and weakly blocks muscle contraction evoked by potassium. In Naja atra (Chinese cobra), this protein is Cysteine-rich venom protein natrin-2.